The sequence spans 213 residues: Probable lipid phosphate phosphatase beta (213 aa).

Transmembrane regions (helical) follow at residues 30 to 50 (PFLP…RFSF), 67 to 87 (VPFL…KLIF), 118 to 138 (VFFV…SMTG), 158 to 178 (VEVV…RILL), and 181 to 201 (HYVL…LFAL).

This sequence belongs to the PA-phosphatase related phosphoesterase family.

It localises to the membrane. The polypeptide is Probable lipid phosphate phosphatase beta (LPPB) (Arabidopsis thaliana (Mouse-ear cress)).